Reading from the N-terminus, the 69-residue chain is Lantibiotic lichenicidin A2 (69 aa).

Positions Met1–Glu37 are excised as a propeptide. Thr38 carries the 2-oxobutanoic acid modification. A (Z)-2,3-didehydrobutyrine mark is found at Thr39, Thr42, and Thr43. The segment at residues Ser44–Cys48 is a cross-link (lanthionine (Ser-Cys)). Ser45 is modified (2,3-didehydroalanine (Ser)). Residues Thr50 and Thr54 each carry the (Z)-2,3-didehydrobutyrine modification. The segment at residues Ser56–Cys60 is a cross-link (lanthionine (Ser-Cys)). Cross-links (beta-methyllanthionine (Thr-Cys)) lie at residues Thr62 to Cys65 and Thr66 to Cys69. The residue at position 63 (Thr63) is a (Z)-2,3-didehydrobutyrine.

Post-translationally, maturation of lantibiotics involves the enzymatic conversion of Thr, and Ser into dehydrated AA and the formation of thioether bonds with cysteine. This is followed by membrane translocation and cleavage of the modified precursor.

It is found in the secreted. It localises to the cell wall. Functionally, lanthionine-containing peptide antibiotic (lantibiotic) active on Gram-positive bacteria. The bactericidal activity of lantibiotics is based on depolarization of energized bacterial cytoplasmic membranes, initiated by the formation of aqueous transmembrane pores. When present individually, LchA2 exhibits activity towards L.lactis HP. When combined with LchA1, it displays activity towards a broad spectrum of non-pathogenic and pathogenic Gram-positive bacteria including strains of L.monocytogenes, methicillin-resistant S.aureus, S.pneumoniae and strains of vancomycin-resistant enterococci, but not towards E.faecium L4001 and BM4147-1. Combined LchA1 and LchA2 peptides also inhibit Bacillus sp. HIL-Y85/54728, L.lactis DPC3417 and B.halodurans C-125, which produce lantibiotics themselves. Inactivated by proteinase K and pronase E, but not by trypsin and chymotrypsin. This chain is Lantibiotic lichenicidin A2, found in Bacillus licheniformis (strain ATCC 14580 / DSM 13 / JCM 2505 / CCUG 7422 / NBRC 12200 / NCIMB 9375 / NCTC 10341 / NRRL NRS-1264 / Gibson 46).